The primary structure comprises 278 residues: GTPase Era (278 aa).

Residues 7–168 enclose the Era-type G domain; it reads YCGYIAIVGK…ENLIYPYLPN (162 aa). The tract at residues 15-22 is G1; the sequence is GKPNVGKS. GTP is bound at residue 15-22; it reads GKPNVGKS. The tract at residues 41–45 is G2; the sequence is NTTQK. The tract at residues 62–65 is G3; it reads DTPG. Residues 62-66 and 117-120 each bind GTP; these read DTPGI and NKID. The segment at 117–120 is G4; sequence NKID. A G5 region spans residues 147–149; the sequence is ISA. Residues 199 to 276 form the KH type-2 domain; that stretch reads LRDELPSIIT…YLIIWVKVKI (78 aa).

Belongs to the TRAFAC class TrmE-Era-EngA-EngB-Septin-like GTPase superfamily. Era GTPase family. In terms of assembly, monomer.

Its subcellular location is the cytoplasm. The protein resides in the cell membrane. An essential GTPase that binds both GDP and GTP, with rapid nucleotide exchange. Plays a role in 16S rRNA processing and 30S ribosomal subunit biogenesis and possibly also in cell cycle regulation and energy metabolism. The chain is GTPase Era from Buchnera aphidicola subsp. Schizaphis graminum (strain Sg).